We begin with the raw amino-acid sequence, 284 residues long: uncharacterized protein (284 aa).

Residues 25 to 123 form the AB hydrolase-1 domain; sequence PILVMHGGHS…NTLTLQSAVT (99 aa). Ser96 is an active-site residue.

It belongs to the AB hydrolase superfamily.

This is an uncharacterized protein from Bacillus subtilis (strain 168).